A 202-amino-acid chain; its full sequence is Orotate phosphoribosyltransferase (202 aa).

Residues arginine 94, lysine 98, histidine 100, and 120–128 contribute to the 5-phospho-alpha-D-ribose 1-diphosphate site; that span reads EDLISTGGS. An orotate-binding site is contributed by serine 124.

It belongs to the purine/pyrimidine phosphoribosyltransferase family. PyrE subfamily. As to quaternary structure, homodimer. The cofactor is Mg(2+).

The catalysed reaction is orotidine 5'-phosphate + diphosphate = orotate + 5-phospho-alpha-D-ribose 1-diphosphate. The protein operates within pyrimidine metabolism; UMP biosynthesis via de novo pathway; UMP from orotate: step 1/2. Functionally, catalyzes the transfer of a ribosyl phosphate group from 5-phosphoribose 1-diphosphate to orotate, leading to the formation of orotidine monophosphate (OMP). The sequence is that of Orotate phosphoribosyltransferase from Oceanobacillus iheyensis (strain DSM 14371 / CIP 107618 / JCM 11309 / KCTC 3954 / HTE831).